The primary structure comprises 332 residues: Receptor polysaccharide phosphotransferase WefC (332 aa).

It belongs to the stealth family.

The protein is Receptor polysaccharide phosphotransferase WefC (wefC) of Streptococcus oralis.